Reading from the N-terminus, the 728-residue chain is Sodium-dependent transporter snf-5 (728 aa).

Residues 1–84 (MADSGSNEEA…PEEEEEKRDG (84 aa)) are Cytoplasmic-facing. Residues 1-84 (MADSGSNEEA…PEEEEEKRDG (84 aa)) form a disordered region. Composition is skewed to low complexity over residues 29–50 (QQVS…STQS) and 60–73 (KNTT…TLDT). Residues 85-105 (FGNSFEFVLTSLGLAVGLGNI) traverse the membrane as a helical segment. Gly97, Ala99, Val100, and Asn104 together coordinate Na(+). The Extracellular segment spans residues 106–119 (WRFPTRAYNNGGSA). The chain crosses the membrane as a helical span at residues 120–140 (FLIPYLTCAFLFGLPAVYFEF). The Cytoplasmic portion of the chain corresponds to 141-162 (LTGQYQGKSPPVIFRRVRPILE). A helical transmembrane segment spans residues 163–183 (GVGWMGVFVAALVAIYYIVIV). Over 184–285 (SWISIYMINI…PSSGMLDFGG (102 aa)) the chain is Extracellular. A disulfide bridge links Cys204 with Cys214. N-linked (GlcNAc...) asparagine glycosylation is found at Asn210, Asn225, Asn232, Asn237, and Asn257. Residues 286–306 (FNWPVFAAMSVCWLLTGLGIL) form a helical membrane-spanning segment. The Cytoplasmic portion of the chain corresponds to 307 to 314 (KGAKIMGK). Residues 315 to 335 (ISYVSVLVPYVLVVVLFINGV) traverse the membrane as a helical segment. At 336–364 (FQDGSGVGLEMYFGTPNYTKLYEQDTWTE) the chain is on the extracellular side. Asn352 carries N-linked (GlcNAc...) asparagine glycosylation. A helical membrane pass occupies residues 365-386 (ALKQLCFSLSVGHGGLISLSSY). Ser372 provides a ligand contact to Na(+). Topologically, residues 387-396 (SPKRNNIFRD) are cytoplasmic. Residues 397-417 (ALIVIIGDTTMSLVGGGAVFA) form a helical membrane-spanning segment. Residues 418–451 (TLGYLAKATGQDVKDVVKSGLSLAFVVYPEAMTR) are Extracellular-facing. Residues 452 to 472 (MPVPWLWCFIFFLMLFLLGAS) traverse the membrane as a helical segment. Leu469 is a Na(+) binding site. Residues 473–495 (TEIALVDVFCSCIYDQYPRFRNR) lie on the Cytoplasmic side of the membrane. The chain crosses the membrane as a helical span at residues 496-516 (KWIVVIAWCSVLYCIGLVFST). Residues 517 to 531 (RAGYYWFEMFDEYAA) are Extracellular-facing. A helical membrane pass occupies residues 532 to 552 (GFSSVCTVVCELLVMMYIYGF). The Cytoplasmic segment spans residues 553–578 (RNVRDDITEVVGHARNKFTGAIGAHS). Residues 579–599 (WYFTANWMVISPSIALILVGL) form a helical membrane-spanning segment. Residues 600–616 (SFVREYPYMGRHDIYPA) lie on the Extracellular side of the membrane. A helical membrane pass occupies residues 617 to 637 (VFDIFGWFLSFLPVIIVPIFM). The Cytoplasmic segment spans residues 638-728 (LLNFIRCRNR…DTSSTYHQVY (91 aa)). Acidic residues predominate over residues 687-699 (PWDEENVDLTDSE). The disordered stretch occupies residues 687-728 (PWDEENVDLTDSESESRNAASGDVPIDDVATIDTSSTYHQVY). Residues 718–728 (IDTSSTYHQVY) are compositionally biased toward polar residues.

The protein belongs to the sodium:neurotransmitter symporter (SNF) (TC 2.A.22) family. As to expression, expressed in the INT-9 cells and posterior cells of the alimentary canal of the intestine, gut epithelial cells, the pharynx of some worms, two cells of the rectal gland, and in DVA, DVB and DVC neurons and amphid sensory neurons ASI, ADF and ASK neurons.

It localises to the cell membrane. In terms of biological role, sodium-dependent amino acid transporter that mediates the uptake of the L-enantiomers of various amino acids, including L-proline and L-methionine, and also of acidic amino acids such as L-glutamic acid and L-aspartic acid. May additionally have a role in potassium-dependent amino acid absorption. In response to the availability of amino acid nutrients, may play a role in dauer formation. May play a role in promoting fertility. The protein is Sodium-dependent transporter snf-5 of Caenorhabditis elegans.